The following is a 214-amino-acid chain: Adenylate kinase (214 aa).

11–16 (GTGKGT) provides a ligand contact to ATP. The NMP stretch occupies residues 31 to 61 (SSGDLFRFYAKEEKTALAEEIKSYINNGLYV). Residues serine 32, arginine 37, 59–61 (LYV), 87–90 (GYPR), and glutamine 94 contribute to the AMP site. An LID region spans residues 124–163 (LRRSCPQCKRIYNINSVDFKPKVANLCDLCKVELIHRKDD). An ATP-binding site is contributed by arginine 125. Cysteine 128 and cysteine 131 together coordinate Zn(2+). Residue 134–135 (IY) participates in ATP binding. The Zn(2+) site is built by cysteine 150 and cysteine 153. 2 residues coordinate AMP: arginine 160 and arginine 171. Lysine 199 contributes to the ATP binding site.

Belongs to the adenylate kinase family. Monomer.

It is found in the cytoplasm. The catalysed reaction is AMP + ATP = 2 ADP. The protein operates within purine metabolism; AMP biosynthesis via salvage pathway; AMP from ADP: step 1/1. Functionally, catalyzes the reversible transfer of the terminal phosphate group between ATP and AMP. Plays an important role in cellular energy homeostasis and in adenine nucleotide metabolism. In Mycoplasmoides gallisepticum (strain R(low / passage 15 / clone 2)) (Mycoplasma gallisepticum), this protein is Adenylate kinase.